The primary structure comprises 272 residues: Elongation factor Ts (272 aa).

Positions 76–79 are involved in Mg(2+) ion dislocation from EF-Tu; the sequence is TDFV.

The protein belongs to the EF-Ts family.

It localises to the cytoplasm. Associates with the EF-Tu.GDP complex and induces the exchange of GDP to GTP. It remains bound to the aminoacyl-tRNA.EF-Tu.GTP complex up to the GTP hydrolysis stage on the ribosome. This is Elongation factor Ts from Corynebacterium urealyticum (strain ATCC 43042 / DSM 7109).